We begin with the raw amino-acid sequence, 772 residues long: Mitochondrial intermediate peptidase (772 aa).

A mitochondrion-targeting transit peptide spans 1–37 (MLRTIILKAGSNASIPSPSRQNKLLRFFATAGAVSRT). Residue histidine 558 coordinates Zn(2+). Glutamate 559 is an active-site residue. Zn(2+) contacts are provided by histidine 562 and glutamate 587.

The protein belongs to the peptidase M3 family. Requires Zn(2+) as cofactor.

Its subcellular location is the mitochondrion matrix. The catalysed reaction is Release of an N-terminal octapeptide as second stage of processing of some proteins imported into the mitochondrion.. With respect to regulation, stimulated by Fe(2+). Functionally, cleaves proteins, imported into the mitochondrion, to their mature size. While most mitochondrial precursor proteins are processed to the mature form in one step by mitochondrial processing peptidase (MPP), the sequential cleavage by MIP of an octapeptide after initial processing by MPP is a required step for a subgroup of nuclear-encoded precursor proteins destined for the matrix or the inner membrane. Cleaves precursor proteins of respiratory components, including subunits of the electron transport chain and tricarboxylic acid cycle enzymes, and components of the mitochondrial genetic machinery, including ribosomal proteins, translation factors, and proteins required for mitochondrial DNA metabolism. The polypeptide is Mitochondrial intermediate peptidase (OCT1) (Saccharomyces cerevisiae (strain ATCC 204508 / S288c) (Baker's yeast)).